Consider the following 407-residue polypeptide: Chorismate synthase (407 aa).

Residues arginine 40 and arginine 46 each contribute to the NADP(+) site. FMN-binding positions include 140–142, 261–262, glycine 305, 320–324, and arginine 346; these read RSS, QA, and KPIST.

This sequence belongs to the chorismate synthase family. In terms of assembly, homotetramer. FMNH2 serves as cofactor.

It catalyses the reaction 5-O-(1-carboxyvinyl)-3-phosphoshikimate = chorismate + phosphate. It functions in the pathway metabolic intermediate biosynthesis; chorismate biosynthesis; chorismate from D-erythrose 4-phosphate and phosphoenolpyruvate: step 7/7. In terms of biological role, catalyzes the anti-1,4-elimination of the C-3 phosphate and the C-6 proR hydrogen from 5-enolpyruvylshikimate-3-phosphate (EPSP) to yield chorismate, which is the branch point compound that serves as the starting substrate for the three terminal pathways of aromatic amino acid biosynthesis. This reaction introduces a second double bond into the aromatic ring system. This is Chorismate synthase from Corynebacterium glutamicum (strain R).